The chain runs to 377 residues: uncharacterized protein (377 aa).

The next 10 membrane-spanning stretches (helical) occupy residues 4-24 (LLTP…LLGT), 41-61 (ASFG…FPIT), 85-105 (IAAL…FLFG), 134-154 (FHAM…IATV), 159-179 (VYVH…PFLL), 192-212 (GAVG…IALA), 278-298 (VFGI…AGFV), 301-321 (GVGY…DLVV), 327-347 (IASV…AIGL), and 356-376 (LCFF…PVLK).

This sequence to R.meliloti MosC.

Its subcellular location is the cell membrane. Functionally, could be involved in a transport system. This is an uncharacterized protein from Sinorhizobium fredii (strain NBRC 101917 / NGR234).